We begin with the raw amino-acid sequence, 215 residues long: UPF0488 protein C8orf33 homolog (215 aa).

Disordered regions lie at residues 1-72 (MLED…DEQL), 87-111 (LRTQ…RSSK), and 158-199 (CKPV…DTKP). Residues 29-39 (AKKHKKKKKKK) show a composition bias toward basic residues. A compositionally biased stretch (basic and acidic residues) spans 40 to 63 (AGEGKDDQQRETKTTEGETAKQET). Composition is skewed to basic and acidic residues over residues 167–178 (ERNTQPKNKTDG) and 188–199 (TNEHTKTEDTKP).

Belongs to the UPF0488 family.

This Danio rerio (Zebrafish) protein is UPF0488 protein C8orf33 homolog.